The following is a 1424-amino-acid chain: Putative disease resistance protein At3g14460 (1424 aa).

An NB-ARC domain is found at 152 to 454; it reads WRQASRSRPD…AIDLLYQPRS (303 aa). 200-207 provides a ligand contact to ATP; it reads GMPGVGKT. LRR repeat units follow at residues 498–523, 552–571, 572–595, 597–618, 620–641, 642–665, and 806–830; these read VSGD…HFSF, PTSL…LLNA, LSGL…LKGL, LLRY…VCTL, NLQT…SIAE, LINL…IKKL, and LPSL…FFFG. 2 disordered regions span residues 911-977 and 1050-1070; these read FRRS…PKDR and IKSS…QYDD. Polar residues-rich tracts occupy residues 912-927 and 934-972; these read RRSL…SIPS and SSPT…SLSS. LRR repeat units follow at residues 1090–1114, 1118–1139, 1238–1262, 1264–1286, and 1310–1336; these read PQNL…LTES, LHEL…HPPT, TPKL…LFGL, SLLS…GFPS, and LENL…LLPK.

Belongs to the disease resistance NB-LRR family.

In terms of biological role, potential disease resistance protein. The protein is Putative disease resistance protein At3g14460 of Arabidopsis thaliana (Mouse-ear cress).